Here is a 154-residue protein sequence, read N- to C-terminus: MSNQMNTMDITEILKYLPHRYPFLLIDRVLDFTPGESLHAIKNVTINEPFFQGHFPIQPVMPGVLILEAMAQATGLLAFKTMSDDVPPPGVLYYFAGIDNARFRRVVEPGDQIHFEVKMIKERRGIGVFYGEAKVDGEVVCSAEIMCARREINQ.

The active site involves H54.

This sequence belongs to the thioester dehydratase family. FabZ subfamily.

It localises to the cytoplasm. It carries out the reaction a (3R)-hydroxyacyl-[ACP] = a (2E)-enoyl-[ACP] + H2O. In terms of biological role, involved in unsaturated fatty acids biosynthesis. Catalyzes the dehydration of short chain beta-hydroxyacyl-ACPs and long chain saturated and unsaturated beta-hydroxyacyl-ACPs. This chain is 3-hydroxyacyl-[acyl-carrier-protein] dehydratase FabZ, found in Shewanella oneidensis (strain ATCC 700550 / JCM 31522 / CIP 106686 / LMG 19005 / NCIMB 14063 / MR-1).